The chain runs to 206 residues: Regulatory protein CysR (206 aa).

The HTH crp-type domain maps to 120 to 196 (RRAEAKLASL…DRALIVRYPE (77 aa)). The segment at residues 156 to 175 (HQVIAELSGSTRVTTTRLLG) is a DNA-binding region (H-T-H motif).

The protein localises to the cytoplasm. Its function is as follows. Probably regulates the expression of genes from the sulfate permease complex. This chain is Regulatory protein CysR (cysR), found in Synechococcus elongatus (strain ATCC 33912 / PCC 7942 / FACHB-805) (Anacystis nidulans R2).